A 195-amino-acid chain; its full sequence is Imidazoleglycerol-phosphate dehydratase (195 aa).

This sequence belongs to the imidazoleglycerol-phosphate dehydratase family.

The protein resides in the cytoplasm. The catalysed reaction is D-erythro-1-(imidazol-4-yl)glycerol 3-phosphate = 3-(imidazol-4-yl)-2-oxopropyl phosphate + H2O. Its pathway is amino-acid biosynthesis; L-histidine biosynthesis; L-histidine from 5-phospho-alpha-D-ribose 1-diphosphate: step 6/9. The protein is Imidazoleglycerol-phosphate dehydratase of Burkholderia cenocepacia (strain HI2424).